The primary structure comprises 353 residues: Protein pelota homolog (353 aa).

The protein belongs to the eukaryotic release factor 1 family. Pelota subfamily. Monomer. Requires a divalent metal cation as cofactor.

Its subcellular location is the cytoplasm. May function in recognizing stalled ribosomes, interact with stem-loop structures in stalled mRNA molecules, and effect endonucleolytic cleavage of the mRNA. May play a role in the release non-functional ribosomes and degradation of damaged mRNAs. Has endoribonuclease activity. The chain is Protein pelota homolog from Methanobrevibacter smithii (strain ATCC 35061 / DSM 861 / OCM 144 / PS).